The following is a 473-amino-acid chain: Methionine aminopeptidase 2 (473 aa).

Positions 23-121 (LAEDSSNGTQ…KLVSIDQSYP (99 aa)) are disordered. The segment covering 41-53 (KATTAVGQDNGNN) has biased composition (polar residues). Residues 73–83 (DDDDDDEDDDV) are compositionally biased toward acidic residues. A compositionally biased stretch (low complexity) spans 84–93 (AAAAAAVGDA). A compositionally biased stretch (basic residues) spans 97-113 (KKKKKKKSSNKKKKKKL). Histidine 224 serves as a coordination point for substrate. 3 residues coordinate a divalent metal cation: aspartate 244, aspartate 255, and histidine 326. Substrate is bound at residue histidine 334. Glutamate 359 and glutamate 454 together coordinate a divalent metal cation.

It belongs to the peptidase M24A family. Methionine aminopeptidase eukaryotic type 2 subfamily. Co(2+) is required as a cofactor. Zn(2+) serves as cofactor. Requires Mn(2+) as cofactor. The cofactor is Fe(2+).

The protein resides in the cytoplasm. It carries out the reaction Release of N-terminal amino acids, preferentially methionine, from peptides and arylamides.. Its function is as follows. Cotranslationally removes the N-terminal methionine from nascent proteins. The N-terminal methionine is often cleaved when the second residue in the primary sequence is small and uncharged (Met-Ala-, Cys, Gly, Pro, Ser, Thr, or Val). This is Methionine aminopeptidase 2 from Lodderomyces elongisporus (strain ATCC 11503 / CBS 2605 / JCM 1781 / NBRC 1676 / NRRL YB-4239) (Yeast).